The following is a 743-amino-acid chain: 1,4-alpha-glucan branching enzyme GlgB (743 aa).

D416 (nucleophile) is an active-site residue. Catalysis depends on E469, which acts as the Proton donor.

Belongs to the glycosyl hydrolase 13 family. GlgB subfamily. Monomer.

It catalyses the reaction Transfers a segment of a (1-&gt;4)-alpha-D-glucan chain to a primary hydroxy group in a similar glucan chain.. Its pathway is glycan biosynthesis; glycogen biosynthesis. In terms of biological role, catalyzes the formation of the alpha-1,6-glucosidic linkages in glycogen by scission of a 1,4-alpha-linked oligosaccharide from growing alpha-1,4-glucan chains and the subsequent attachment of the oligosaccharide to the alpha-1,6 position. The protein is 1,4-alpha-glucan branching enzyme GlgB of Shewanella baltica (strain OS185).